Here is a 439-residue protein sequence, read N- to C-terminus: 23S rRNA (uracil(1939)-C(5))-methyltransferase RlmD (439 aa).

Residues 10–68 enclose the TRAM domain; it reads QKKLRAAFTTIVQDLDYQGLGVAKIQGKTWFIENALPQEQVQVQVIEEKRQYGLGRVQK. Positions 81, 87, 90, and 168 each coordinate [4Fe-4S] cluster. Q271, F300, N305, E321, D348, and D369 together coordinate S-adenosyl-L-methionine. Catalysis depends on C395, which acts as the Nucleophile.

Belongs to the class I-like SAM-binding methyltransferase superfamily. RNA M5U methyltransferase family. RlmD subfamily.

It catalyses the reaction uridine(1939) in 23S rRNA + S-adenosyl-L-methionine = 5-methyluridine(1939) in 23S rRNA + S-adenosyl-L-homocysteine + H(+). Its function is as follows. Catalyzes the formation of 5-methyl-uridine at position 1939 (m5U1939) in 23S rRNA. The polypeptide is 23S rRNA (uracil(1939)-C(5))-methyltransferase RlmD (Histophilus somni (strain 129Pt) (Haemophilus somnus)).